Reading from the N-terminus, the 695-residue chain is NAD(P)H-quinone oxidoreductase subunit 5, chloroplastic (695 aa).

A run of 15 helical transmembrane segments spans residues 1–21 (WIIP…LILF), 32–52 (WAFQ…YLSI), 81–101 (IDPL…MVLI), 117–137 (FAYM…SNLI), 139–159 (IYIF…FWFT), 177–197 (GDFG…SFEF), 211–231 (NEVN…GAVA), 250–270 (TPIS…FLVA), 278–298 (VIPY…LLGA), 319–339 (LGYM…FHLI), 346–366 (ALLF…VGYS), 388–408 (ITFL…CFWS), 417–437 (WLYS…TAFY), 535–555 (LFPI…GIPF), and 594–614 (VLSV…YKPI).

Belongs to the complex I subunit 5 family. NDH is composed of at least 16 different subunits, 5 of which are encoded in the nucleus.

Its subcellular location is the plastid. It is found in the chloroplast thylakoid membrane. It catalyses the reaction a plastoquinone + NADH + (n+1) H(+)(in) = a plastoquinol + NAD(+) + n H(+)(out). It carries out the reaction a plastoquinone + NADPH + (n+1) H(+)(in) = a plastoquinol + NADP(+) + n H(+)(out). Its function is as follows. NDH shuttles electrons from NAD(P)H:plastoquinone, via FMN and iron-sulfur (Fe-S) centers, to quinones in the photosynthetic chain and possibly in a chloroplast respiratory chain. The immediate electron acceptor for the enzyme in this species is believed to be plastoquinone. Couples the redox reaction to proton translocation, and thus conserves the redox energy in a proton gradient. This chain is NAD(P)H-quinone oxidoreductase subunit 5, chloroplastic (ndhF), found in Capsicum baccatum (Peruvian pepper).